The chain runs to 540 residues: MAVSAFRGTRLPLFHHSQFPVARTVSGTSKKMIGARNFKGFVLTAQYSQTQDLFTSRLQSQIEKLPKLVEDIVQTSINTGPRGVTRLVQGVQAFVGVGGEWLNDLSKSTSASGGLPSELQLGLLSPLYLRKLFERMGATYIKLGQFIASAPTLFPPEYVKEFQNCFDKAPPVPFEEIRKILQEELGRPIESVYEYVDPTPIASASIAQVHGARLRGSQEDVVIKVLKPGIEDFLVADLNFIYVVSRIFEFLSPEFSRTSLVGIVKDIRESMLEEVDFNKEAQNIESFKRYLETMGLTGQATAPRVYKYCSSRRVLTMERLYGVPLTDLDSIRSLVSSPENSLITALNVWFGSLLACESFHADVHAGNLWLLRDGRIGFLDFGIVGRISPKTWAAMEVFLASIATEEYESMASALIQMGATNRDVDGKAFAKDLEKMFSSIQELDTEIVVATARGTNSDTTAVAANVVMDERQMNALFLDLVRVSESYGLKFPREFALLLKQLLYFDRYTRLLAPNLNMLQDQRISIASNKRTNGYKDSFN.

A chloroplast-targeting transit peptide spans 1-58 (MAVSAFRGTRLPLFHHSQFPVARTVSGTSKKMIGARNFKGFVLTAQYSQTQDLFTSRL). Residues 195 to 533 (YVDPTPIASA…ISIASNKRTN (339 aa)) enclose the Protein kinase domain. ATP contacts are provided by residues 201 to 209 (IASASIAQV) and lysine 224. Catalysis depends on aspartate 362, which acts as the Proton acceptor.

The protein belongs to the protein kinase superfamily. ADCK protein kinase family.

It localises to the plastid. Its subcellular location is the chloroplast. It is found in the plastoglobule. This is an uncharacterized protein from Arabidopsis thaliana (Mouse-ear cress).